We begin with the raw amino-acid sequence, 216 residues long: Ras-related protein RABA1b (216 aa).

20–27 (GDSGVGKS) is a binding site for GTP. Positions 42-50 (SKSTIGVEF) match the Effector region motif. GTP contacts are provided by residues 68–72 (DTAGQ), 126–129 (NKSD), and 156–157 (SA). S-geranylgeranyl cysteine attachment occurs at residues cysteine 213 and cysteine 214.

This sequence belongs to the small GTPase superfamily. Rab family.

Its subcellular location is the cell membrane. In terms of biological role, intracellular vesicle trafficking and protein transport. This is Ras-related protein RABA1b (RABA1B) from Arabidopsis thaliana (Mouse-ear cress).